A 543-amino-acid polypeptide reads, in one-letter code: EH domain-containing protein 2 (543 aa).

Ser-3 and Ser-44 each carry phosphoserine. Residues 55 to 286 (FDGKPMVLVA…DLFRDIQGLP (232 aa)) enclose the Dynamin-type G domain. The segment at 65 to 72 (GQYSTGKT) is G1 motif. 65 to 72 (GQYSTGKT) is an ATP binding site. Positions 91–92 (EP) are G2 motif. The interval 153–156 (DTPG) is G3 motif. The segment at 219–222 (NKAD) is G4 motif. Residue Lys-220 coordinates ATP. Residue Val-243 is a region of interest, G5 motif. Residue Trp-258 coordinates ATP. The tract at residues 320 to 340 (TVFGKENKKKQLILKLPVIFA) is mediates membrane-binding. 5 positions are modified to phosphoserine: Ser-438, Ser-468, Ser-470, Ser-484, and Ser-493. Residues 449–537 (DKSKYDEIFY…RRLVPPSKRR (89 aa)) enclose the EH domain. In terms of domain architecture, EF-hand spans 481 to 516 (LPNSVLGRIWKLSDVDRDGMLDDEEFALASHLIEAK). Residues Asp-494, Asp-496, Asp-498, Met-500, and Glu-505 each contribute to the Ca(2+) site. The tract at residues 521-543 (GLPTNLPRRLVPPSKRRQKGSAE) is disordered. Positions 534-543 (SKRRQKGSAE) are enriched in basic residues.

This sequence belongs to the TRAFAC class dynamin-like GTPase superfamily. Dynamin/Fzo/YdjA family. EHD subfamily. Homodimer and homooligomer. Interacts with EHD1. May also interact with EHD3 and EHD4. Interacts with MYOF. Interacts with EHBP1. Interacts with FER1L5 (via second C2 domain). Interacts with CAV1 in a cholesterol-dependent manner. Interacts (via EH domain) with PACSIN2 (via NPF motifs); this interaction probably stabilizes the caveolae. In terms of tissue distribution, detected in lung and adipocytes. Detected at lower levels in heart and skeletal muscle.

Its subcellular location is the cell membrane. It is found in the membrane. The protein localises to the caveola. It localises to the endosome membrane. The protein resides in the cytoplasm. Its subcellular location is the cytosol. Its activity is regulated as follows. The very low intrinsic ATPase activity is increased upon interaction with liposomes. In terms of biological role, ATP- and membrane-binding protein that controls membrane reorganization/tubulation upon ATP hydrolysis. Plays a role in membrane trafficking between the plasma membrane and endosomes. Important for the internalization of GLUT4. Required for fusion of myoblasts to skeletal muscle myotubes. Required for normal translocation of FER1L5 to the plasma membrane. Regulates the equilibrium between cell surface-associated and cell surface-dissociated caveolae by constraining caveolae at the cell membrane. This is EH domain-containing protein 2 from Mus musculus (Mouse).